A 489-amino-acid polypeptide reads, in one-letter code: MSSQFPSSPYRTVDPYSPPNYKQQPNCPSSNYEKAGKTASESIGNFGKGDYPTPFPSSSIGRVSSPVRSNKVDAIPSSPAFPGQLAETSPKFSSKLSSPSRHTRVINAELDPSKISTITVGRNSSQCDVALCKNKFISRVHASITYLPQTNEVKIHCFSMNGLIVTYRKQFDCYQLKDTMNNNNRAYRLVPRFSNEKCVKEIQDEGGFINFTLEEGDTVYMTYYKGIMLDFRQVLLRISLKEKNSSSEPLRFEKKAEFESESETKHMGSIRKHPLIFTDTSMDRPKKILKDSNKISIGSDSGVAERMLNHFLNSKSSPLSSVSSVDHEEQTLRQDSLSSDKNPMTMKKPKLNKRVLPSKPKKSVKENLDELSRRNIDVMHLQHILTNHLAFANVQQTPLFQLQQVNSQISELSRDELRSILSDAKCVGVIYRHGKDAAGKPLDEEYFYDLENDDDYERRNLVSSLKGGRTGLRSCRRTHKQYFWKKPAK.

Composition is skewed to polar residues over residues 1–10 (MSSQFPSSPY) and 20–32 (NYKQ…SSNY). The interval 1-101 (MSSQFPSSPY…FSSKLSSPSR (101 aa)) is disordered. Phosphoserine is present on serine 40. Positions 56–68 (PSSSIGRVSSPVR) are enriched in polar residues. The segment covering 89 to 100 (SPKFSSKLSSPS) has biased composition (low complexity). Serine 100 is subject to Phosphoserine. Positions 118–170 (ITVGRNSSQCDVALCKNKFISRVHASITYLPQTNEVKIHCFSMNGLIVTYRKQ) constitute an FHA domain. The segment at 316–366 (SSPLSSVSSVDHEEQTLRQDSLSSDKNPMTMKKPKLNKRVLPSKPKKSVKE) is disordered. Residues 333 to 342 (RQDSLSSDKN) show a composition bias toward polar residues.

This sequence belongs to the PLM2/TOS4 family. Post-translationally, phosphorylated by CDC28.

The protein resides in the nucleus. Binds to the promoters of genes with functions important for the G1/S (start) transition; primarily genes involved in pheromone response, polarized growth and transcription. The sequence is that of Protein TOS4 (TOS4) from Saccharomyces cerevisiae (strain ATCC 204508 / S288c) (Baker's yeast).